The primary structure comprises 201 residues: Orotate phosphoribosyltransferase (201 aa).

A 5-phospho-alpha-D-ribose 1-diphosphate-binding site is contributed by 113 to 121; the sequence is EDIITTGKS. Orotate-binding residues include threonine 117 and arginine 145.

It belongs to the purine/pyrimidine phosphoribosyltransferase family. PyrE subfamily. As to quaternary structure, homodimer. Requires Mg(2+) as cofactor.

The catalysed reaction is orotidine 5'-phosphate + diphosphate = orotate + 5-phospho-alpha-D-ribose 1-diphosphate. The protein operates within pyrimidine metabolism; UMP biosynthesis via de novo pathway; UMP from orotate: step 1/2. In terms of biological role, catalyzes the transfer of a ribosyl phosphate group from 5-phosphoribose 1-diphosphate to orotate, leading to the formation of orotidine monophosphate (OMP). This Helicobacter pylori (strain G27) protein is Orotate phosphoribosyltransferase.